Here is a 117-residue protein sequence, read N- to C-terminus: Putative hydrolase fragment YghX (117 aa).

Residues aspartate 91 to asparagine 117 are disordered.

This Escherichia coli (strain K12) protein is Putative hydrolase fragment YghX (yghX).